The chain runs to 484 residues: Aspartyl/glutamyl-tRNA(Asn/Gln) amidotransferase subunit B (484 aa).

The protein belongs to the GatB/GatE family. GatB subfamily. In terms of assembly, heterotrimer of A, B and C subunits.

The enzyme catalyses L-glutamyl-tRNA(Gln) + L-glutamine + ATP + H2O = L-glutaminyl-tRNA(Gln) + L-glutamate + ADP + phosphate + H(+). The catalysed reaction is L-aspartyl-tRNA(Asn) + L-glutamine + ATP + H2O = L-asparaginyl-tRNA(Asn) + L-glutamate + ADP + phosphate + 2 H(+). Allows the formation of correctly charged Asn-tRNA(Asn) or Gln-tRNA(Gln) through the transamidation of misacylated Asp-tRNA(Asn) or Glu-tRNA(Gln) in organisms which lack either or both of asparaginyl-tRNA or glutaminyl-tRNA synthetases. The reaction takes place in the presence of glutamine and ATP through an activated phospho-Asp-tRNA(Asn) or phospho-Glu-tRNA(Gln). This is Aspartyl/glutamyl-tRNA(Asn/Gln) amidotransferase subunit B from Bordetella parapertussis (strain 12822 / ATCC BAA-587 / NCTC 13253).